The primary structure comprises 560 residues: Glutamine--tRNA ligase (560 aa).

Residues 36–46 (PEPNGFAHIGH) carry the 'HIGH' region motif. ATP-binding positions include 37 to 39 (EPN) and 43 to 49 (HIGHAKA). The L-glutamine site is built by Asp-69 and Tyr-214. Position 263 to 264 (263 to 264 (RL)) interacts with ATP. Positions 270 to 274 (LTSKR) match the 'KMSKS' region motif.

Belongs to the class-I aminoacyl-tRNA synthetase family. Monomer.

Its subcellular location is the cytoplasm. The catalysed reaction is tRNA(Gln) + L-glutamine + ATP = L-glutaminyl-tRNA(Gln) + AMP + diphosphate. This Chromobacterium violaceum (strain ATCC 12472 / DSM 30191 / JCM 1249 / CCUG 213 / NBRC 12614 / NCIMB 9131 / NCTC 9757 / MK) protein is Glutamine--tRNA ligase.